Reading from the N-terminus, the 359-residue chain is Membrane-bound lytic murein transglycosylase C (359 aa).

The first 16 residues, 1-16 (MKKYLALALIAPLLIS), serve as a signal peptide directing secretion. The N-palmitoyl cysteine moiety is linked to residue cysteine 17. Cysteine 17 carries the S-diacylglycerol cysteine lipid modification.

This sequence belongs to the transglycosylase Slt family.

The protein localises to the cell outer membrane. The enzyme catalyses Exolytic cleavage of the (1-&gt;4)-beta-glycosidic linkage between N-acetylmuramic acid (MurNAc) and N-acetylglucosamine (GlcNAc) residues in peptidoglycan, from either the reducing or the non-reducing ends of the peptidoglycan chains, with concomitant formation of a 1,6-anhydrobond in the MurNAc residue.. Murein-degrading enzyme. May play a role in recycling of muropeptides during cell elongation and/or cell division. The protein is Membrane-bound lytic murein transglycosylase C of Escherichia coli O157:H7.